The following is a 711-amino-acid chain: Polyribonucleotide nucleotidyltransferase (711 aa).

Residues D490 and D496 each coordinate Mg(2+). A KH domain is found at 556–615 (PRIETMQVPTDKIREVIGSGGKVIREIVEVSGAKVDINDDGVIKIASANGEAIQKAYDMI). An S1 motif domain is found at 625-693 (GAVYTGKVVK…DRGKVRLSMK (69 aa)).

The protein belongs to the polyribonucleotide nucleotidyltransferase family. Requires Mg(2+) as cofactor.

The protein localises to the cytoplasm. The enzyme catalyses RNA(n+1) + phosphate = RNA(n) + a ribonucleoside 5'-diphosphate. In terms of biological role, involved in mRNA degradation. Catalyzes the phosphorolysis of single-stranded polyribonucleotides processively in the 3'- to 5'-direction. The sequence is that of Polyribonucleotide nucleotidyltransferase from Ruegeria sp. (strain TM1040) (Silicibacter sp.).